Reading from the N-terminus, the 366-residue chain is A-type ATP synthase subunit C (366 aa).

The protein belongs to the V-ATPase V0D/AC39 subunit family. As to quaternary structure, has multiple subunits with at least A(3), B(3), C, D, E, F, H, I and proteolipid K(x).

The protein resides in the cell membrane. Functionally, component of the A-type ATP synthase that produces ATP from ADP in the presence of a proton gradient across the membrane. In Thermococcus gammatolerans (strain DSM 15229 / JCM 11827 / EJ3), this protein is A-type ATP synthase subunit C.